The sequence spans 1158 residues: Formin-C (1158 aa).

3 disordered regions span residues 8 to 29 (INGN…PSVS), 417 to 523 (PNTS…LSCL), and 990 to 1052 (INNN…NNSQ). The 369-residue stretch at 20–388 (QQPQQNPSVS…EYSQRKLEMI (369 aa)) folds into the GBD/FH3 domain. Positions 417-437 (PNTSDLFDSSTLEDTYDGNND) are enriched in polar residues. Over residues 438-481 (TNSCTSISTSSTPIHISQPTTLIVPSTTPNHPPQQSQQTPPLQL) the composition is skewed to low complexity. Positions 479-515 (LQLQKEKEKEKEKEKEKEKEKEKEQQQQQQQSNKQST) form a coiled coil. Residues 482–503 (QKEKEKEKEKEKEKEKEKEKEQ) show a composition bias toward basic and acidic residues. In terms of domain architecture, FH2 spans 601-998 (TKSPITPSKR…IINNNNNNNN (398 aa)). One can recognise a DAD domain in the interval 1134-1158 (SDDPMAVIIEALKTGSPNDMVKRAF).

Belongs to the formin homology family. Diaphanous subfamily. As to quaternary structure, interacts (via GBD/FH3 domain) with activated Rho-GTPases.

The protein resides in the cytoplasm. It is found in the cytosol. Its subcellular location is the cytoskeleton. Formins play an important role in the nucleation of actin and the formation of linear actin filaments. This Dictyostelium discoideum (Social amoeba) protein is Formin-C (forC).